Here is a 136-residue protein sequence, read N- to C-terminus: Large ribosomal subunit protein uL16 (136 aa).

Belongs to the universal ribosomal protein uL16 family. As to quaternary structure, part of the 50S ribosomal subunit.

In terms of biological role, binds 23S rRNA and is also seen to make contacts with the A and possibly P site tRNAs. In Haemophilus influenzae (strain 86-028NP), this protein is Large ribosomal subunit protein uL16.